The chain runs to 90 residues: UPF0237 protein NMB1653 (90 aa).

In terms of domain architecture, ACT spans 5-83 (VITVIGKDRV…LDIRMQNEEI (79 aa)).

The protein belongs to the UPF0237 family.

This chain is UPF0237 protein NMB1653, found in Neisseria meningitidis serogroup B (strain ATCC BAA-335 / MC58).